We begin with the raw amino-acid sequence, 428 residues long: Patatin-like protein 3 (428 aa).

A PNPLA domain is found at L38–I252. The GXGXXG motif lies at G42 to G47. The GXSXG signature appears at G80 to G84. The active-site Nucleophile is the S82. D239 functions as the Proton acceptor in the catalytic mechanism. The DGA/G motif lies at D239–G241. The residue at position 423 (S423) is a Phosphoserine.

Belongs to the patatin family. Expressed specifically in the stigma, ovary and funiculus of the ovary.

The protein localises to the cytoplasm. Possesses non-specific lipolytic acyl hydrolase (LAH) activity. Catalyzes the hydrolysis of the neutral lipids monogalactosyldiacylglycerol (MGDG), digalactosyldiacylglycerol (DGDG) and phosphatidylglycerol (PG), and less efficiently the polar lipids phosphatidylcholine (PC) and phosphatidylinositol (PI), but not the storage lipid triacylglycerol (TAG). May play a role in root development. In Arabidopsis thaliana (Mouse-ear cress), this protein is Patatin-like protein 3 (PLP3).